The sequence spans 212 residues: MNSKFIVIEGLEGAGKTTARDTVVAVLRAQGINDIVFTREPGGTPLAEKLRDLIKQGIDGEVLTDKAEVLMLYAARVQLVENVIKPALARGSWVVGDRHDLSSQAYQGGGRGIDSQLMASLRDTVLGEFRPDLTLYLDLPPAVGLARARARGELDRIEQESLAFFERTRARYLELAASDASIKTIDASQPIEQVSASISQALAQWLTNQEPV.

An ATP-binding site is contributed by 10-17; sequence GLEGAGKT.

Belongs to the thymidylate kinase family.

It carries out the reaction dTMP + ATP = dTDP + ADP. Its function is as follows. Phosphorylation of dTMP to form dTDP in both de novo and salvage pathways of dTTP synthesis. The polypeptide is Thymidylate kinase (Yersinia pseudotuberculosis serotype O:3 (strain YPIII)).